We begin with the raw amino-acid sequence, 138 residues long: MAKAIPKISSRRNGRIGSRKGARRIPKGVIHVQASFNNTIVTVTDVRGRVVSWSSAGTSGFKGTRRGTPFAAQTAVANAIRTVVDQGMQRAEVMIKGPGLGRDAALRAIRRSGILLTFVRDVTPMPHNGCRPPKKRRV.

The tract at residues 1-22 (MAKAIPKISSRRNGRIGSRKGA) is disordered. Basic residues predominate over residues 9 to 22 (SSRRNGRIGSRKGA).

This sequence belongs to the universal ribosomal protein uS11 family. As to quaternary structure, part of the 30S ribosomal subunit.

The protein resides in the plastid. The protein localises to the chloroplast. This Nicotiana tomentosiformis (Tobacco) protein is Small ribosomal subunit protein uS11c.